The primary structure comprises 147 residues: UPF0306 protein YhbP (147 aa).

It belongs to the UPF0306 family.

This Shigella boydii serotype 4 (strain Sb227) protein is UPF0306 protein YhbP.